The following is a 639-amino-acid chain: Chaperone protein DnaK (639 aa).

At Thr-198 the chain carries Phosphothreonine; by autocatalysis. The segment covering 603–618 has biased composition (low complexity); sequence AKAQTQGGAQEGAAKQ. The tract at residues 603-639 is disordered; the sequence is AKAQTQGGAQEGAAKQSNATADDVVDAEFEEVKDDKK. Acidic residues predominate over residues 625-639; sequence DVVDAEFEEVKDDKK.

The protein belongs to the heat shock protein 70 family.

Acts as a chaperone. This chain is Chaperone protein DnaK, found in Shewanella oneidensis (strain ATCC 700550 / JCM 31522 / CIP 106686 / LMG 19005 / NCIMB 14063 / MR-1).